Consider the following 60-residue polypeptide: Large ribosomal subunit protein bL33 (60 aa).

Belongs to the bacterial ribosomal protein bL33 family.

In Chlorobium limicola (strain DSM 245 / NBRC 103803 / 6330), this protein is Large ribosomal subunit protein bL33.